The chain runs to 158 residues: 6,7-dimethyl-8-ribityllumazine synthase (158 aa).

5-amino-6-(D-ribitylamino)uracil-binding positions include Phe22, 57–59 (AVE), and 81–83 (AVI). 86 to 87 (GT) is a binding site for (2S)-2-hydroxy-3-oxobutyl phosphate. His89 (proton donor) is an active-site residue. Phe114 is a binding site for 5-amino-6-(D-ribitylamino)uracil. Arg128 contacts (2S)-2-hydroxy-3-oxobutyl phosphate.

It belongs to the DMRL synthase family. As to quaternary structure, forms an icosahedral capsid composed of 60 subunits, arranged as a dodecamer of pentamers.

It catalyses the reaction (2S)-2-hydroxy-3-oxobutyl phosphate + 5-amino-6-(D-ribitylamino)uracil = 6,7-dimethyl-8-(1-D-ribityl)lumazine + phosphate + 2 H2O + H(+). It participates in cofactor biosynthesis; riboflavin biosynthesis; riboflavin from 2-hydroxy-3-oxobutyl phosphate and 5-amino-6-(D-ribitylamino)uracil: step 1/2. Catalyzes the formation of 6,7-dimethyl-8-ribityllumazine by condensation of 5-amino-6-(D-ribitylamino)uracil with 3,4-dihydroxy-2-butanone 4-phosphate. This is the penultimate step in the biosynthesis of riboflavin. In Shewanella halifaxensis (strain HAW-EB4), this protein is 6,7-dimethyl-8-ribityllumazine synthase.